Here is an 895-residue protein sequence, read N- to C-terminus: Pyruvate dehydrogenase E1 component (895 aa).

The interval M1–Q20 is disordered.

As to quaternary structure, homodimer. Part of the PDH complex, consisting of multiple copies of pyruvate dehydrogenase (E1), dihydrolipoamide acetyltransferase (E2) and lipoamide dehydrogenase (E3). Thiamine diphosphate serves as cofactor.

The catalysed reaction is N(6)-[(R)-lipoyl]-L-lysyl-[protein] + pyruvate + H(+) = N(6)-[(R)-S(8)-acetyldihydrolipoyl]-L-lysyl-[protein] + CO2. Functionally, component of the pyruvate dehydrogenase (PDH) complex, that catalyzes the overall conversion of pyruvate to acetyl-CoA and CO(2). This chain is Pyruvate dehydrogenase E1 component (pdhA), found in Cupriavidus necator (strain ATCC 17699 / DSM 428 / KCTC 22496 / NCIMB 10442 / H16 / Stanier 337) (Ralstonia eutropha).